The sequence spans 445 residues: Tubulin beta-2 chain (445 aa).

Residues Gln-12, Glu-73, Ser-142, Gly-146, Thr-147, Gly-148, Asn-208, and Asn-230 each contribute to the GTP site. Mg(2+) is bound at residue Glu-73.

This sequence belongs to the tubulin family. As to quaternary structure, dimer of alpha and beta chains. A typical microtubule is a hollow water-filled tube with an outer diameter of 25 nm and an inner diameter of 15 nM. Alpha-beta heterodimers associate head-to-tail to form protofilaments running lengthwise along the microtubule wall with the beta-tubulin subunit facing the microtubule plus end conferring a structural polarity. Microtubules usually have 13 protofilaments but different protofilament numbers can be found in some organisms and specialized cells. Mg(2+) is required as a cofactor.

It localises to the cytoplasm. It is found in the cytoskeleton. Its function is as follows. Tubulin is the major constituent of microtubules, a cylinder consisting of laterally associated linear protofilaments composed of alpha- and beta-tubulin heterodimers. Microtubules grow by the addition of GTP-tubulin dimers to the microtubule end, where a stabilizing cap forms. Below the cap, tubulin dimers are in GDP-bound state, owing to GTPase activity of alpha-tubulin. This is Tubulin beta-2 chain (TUBB2) from Suillus bovinus (Jersey cow bolete).